Reading from the N-terminus, the 185-residue chain is MEFRPVLITVRRDPGVNTGSLKVIAYDLHYDNIFDNCAVKSFRDTDTGFTVMKEYSTNSAFILSPYKLFSAVFNKEGEMISNDVGSSFRVYNIFSQMCKDINEISEIQRAGYLETYLGDGQADTDIFFDVLTNNKAKVRWLVNKDHSAWCGILNDLKWEESNKEKFKGRDILDTYVLSSDYPGFK.

In Vitis vinifera (Grape), this protein is Protein P21.